The following is a 384-amino-acid chain: Formate-dependent phosphoribosylglycinamide formyltransferase (384 aa).

Residues 14 to 15 and E74 each bind N(1)-(5-phospho-beta-D-ribosyl)glycinamide; that span reads EL. ATP contacts are provided by residues R106, K147, 152–157, 187–190, and E195; these read SSGKGQ and EEFI. Residues 111 to 300 form the ATP-grasp domain; the sequence is RLAAETLGLA…EFALHVRAIL (190 aa). Residues E259 and E271 each contribute to the Mg(2+) site. N(1)-(5-phospho-beta-D-ribosyl)glycinamide contacts are provided by residues D278, K348, and 355–356; that span reads RR.

It belongs to the PurK/PurT family. In terms of assembly, homodimer.

It carries out the reaction N(1)-(5-phospho-beta-D-ribosyl)glycinamide + formate + ATP = N(2)-formyl-N(1)-(5-phospho-beta-D-ribosyl)glycinamide + ADP + phosphate + H(+). It participates in purine metabolism; IMP biosynthesis via de novo pathway; N(2)-formyl-N(1)-(5-phospho-D-ribosyl)glycinamide from N(1)-(5-phospho-D-ribosyl)glycinamide (formate route): step 1/1. Its function is as follows. Catalyzes two reactions: the first one is the production of beta-formyl glycinamide ribonucleotide (GAR) from formate, ATP and beta GAR; the second, a side reaction, is the production of acetyl phosphate and ADP from acetate and ATP. In terms of biological role, involved in the de novo purine biosynthesis. Catalyzes the transfer of formate to 5-phospho-ribosyl-glycinamide (GAR), producing 5-phospho-ribosyl-N-formylglycinamide (FGAR). Formate is provided by PurU via hydrolysis of 10-formyl-tetrahydrofolate. In Bacillus subtilis (strain 168), this protein is Formate-dependent phosphoribosylglycinamide formyltransferase.